The primary structure comprises 130 residues: YopE regulator (130 aa).

Its function is as follows. Positive regulator of YopE. This Yersinia pestis protein is YopE regulator (yerA).